A 167-amino-acid chain; its full sequence is Transmembrane protein 229B (167 aa).

At 1–14 (MASAEPLTALSRWY) the chain is on the cytoplasmic side. The chain crosses the membrane as a helical span at residues 15–35 (LYAIHGYFCEVMFTAAWEFVV). Residues 36–40 (NLNWK) lie on the Extracellular side of the membrane. The helical transmembrane segment at 41–61 (FPGVTSVWALFIYGTSILIVE) threads the bilayer. The Cytoplasmic segment spans residues 62 to 73 (RMYLRLRGRCPL). The helical transmembrane segment at 74 to 94 (LLRCLIYTLWTYLWEFTTGFI) threads the bilayer. Over 95–109 (LRQFNACPWDYSQFD) the chain is Extracellular. A helical membrane pass occupies residues 110–130 (FDFMGLITLEYAVPWFCGALI). Residues 131–167 (MEQFIIRNTLRLRFDKDAEPGEPSGALALANGHVKTD) lie on the Cytoplasmic side of the membrane.

It belongs to the TMEM229 family.

Its subcellular location is the membrane. The chain is Transmembrane protein 229B (TMEM229B) from Homo sapiens (Human).